The sequence spans 313 residues: Coproporphyrin III ferrochelatase (313 aa).

Fe(2+)-binding residues include H191 and E270.

It belongs to the ferrochelatase family.

The protein resides in the cytoplasm. It carries out the reaction Fe-coproporphyrin III + 2 H(+) = coproporphyrin III + Fe(2+). It participates in porphyrin-containing compound metabolism; protoheme biosynthesis. Its function is as follows. Involved in coproporphyrin-dependent heme b biosynthesis. Catalyzes the insertion of ferrous iron into coproporphyrin III to form Fe-coproporphyrin III. The sequence is that of Coproporphyrin III ferrochelatase from Enterococcus faecalis (strain ATCC 700802 / V583).